Reading from the N-terminus, the 136-residue chain is Large-conductance mechanosensitive channel (136 aa).

The next 2 helical transmembrane spans lie at 9 to 29 (AFAS…GAAF) and 79 to 99 (IQTV…LKAI).

It belongs to the MscL family. As to quaternary structure, homopentamer.

The protein resides in the cell inner membrane. Channel that opens in response to stretch forces in the membrane lipid bilayer. May participate in the regulation of osmotic pressure changes within the cell. This chain is Large-conductance mechanosensitive channel, found in Shewanella sp. (strain MR-4).